A 70-amino-acid polypeptide reads, in one-letter code: Testis-expressed protein 53 (70 aa).

Expressed in Testis.

The sequence is that of Testis-expressed protein 53 from Homo sapiens (Human).